A 387-amino-acid polypeptide reads, in one-letter code: MKWLWVLGLVALSECLVKIPLMKIKSMRENLRESQVLKDYLEKYPRSRAHVLLEQRRNPAVTYEPMRNYLDLVYIGIISIGTPPQEFRVVLDTGSSVLWVPSIYCSSPACAHHKAFNPLRSSTFLVSGRPVNVAYGSGEMSGFLAYDTVRIGDLTVVAQAFGLSLEEPGIFMEYAVFDGILGLGYPNLGLQGITPVFDNLWLQGLIPQNLFAFYLSSKDEKGSMLMLGGVDPSYYHGELHWVPVSKPSYWQLAVDSISMNGEVIACDGGCQGIMDTGTSLLTGPRSSIVNIQNLIGAKASGDGEYFLKCDTINTLPDIVFTIGSVTYPVPASAYIRKDRSHNCRSNFEEGMDDPSDPEMWVLGDVFLRLYFTVFDRANNRIGLAPAA.

An N-terminal signal peptide occupies residues 1–15; sequence MKWLWVLGLVALSEC. Residues 16–62 constitute a propeptide, activation peptide; sequence LVKIPLMKIKSMRENLRESQVLKDYLEKYPRSRAHVLLEQRRNPAVT. The Peptidase A1 domain occupies 74 to 384; sequence YIGIISIGTP…DRANNRIGLA (311 aa). Aspartate 92 is an active-site residue. 2 disulfides stabilise this stretch: cysteine 105–cysteine 110 and cysteine 266–cysteine 270. Aspartate 275 is a catalytic residue. Cysteine 309 and cysteine 343 are oxidised to a cystine.

It belongs to the peptidase A1 family. In terms of tissue distribution, expressed in glandular chief cells of the neonatal stomach. Expressed in yolk sacs of the placenta (at protein level).

The protein localises to the secreted. It catalyses the reaction Preferential cleavage: hydrophobic, preferably aromatic, residues in P1 and P1' positions. Cleaves 1-Phe-|-Val-2, 4-Gln-|-His-5, 13-Glu-|-Ala-14, 14-Ala-|-Leu-15, 15-Leu-|-Tyr-16, 16-Tyr-|-Leu-17, 23-Gly-|-Phe-24, 24-Phe-|-Phe-25 and 25-Phe-|-Tyr-26 bonds in the B chain of insulin.. With respect to regulation, inhibited by pepstatin A. Shows particularly broad specificity; although bonds involving phenylalanine and leucine are preferred, many others are also cleaved to some extent. May play a role as a specialized neonatal digestive enzyme. The protein is Pepsin A-5 of Mus musculus (Mouse).